A 543-amino-acid chain; its full sequence is Cytochrome P450 1B1 (543 aa).

Residue cysteine 470 coordinates heme.

It belongs to the cytochrome P450 family. Heme is required as a cofactor. Expressed in heart, brain, lung, skeletal muscle, kidney, spleen, thymus, prostate, testis, ovary, small intestine, colon, and peripheral blood leukocytes. Expressed in retinal endothelial cells and umbilical vein endothelial cells (at protein level).

It localises to the endoplasmic reticulum membrane. It is found in the microsome membrane. Its subcellular location is the mitochondrion. It carries out the reaction an organic molecule + reduced [NADPH--hemoprotein reductase] + O2 = an alcohol + oxidized [NADPH--hemoprotein reductase] + H2O + H(+). It catalyses the reaction 17beta-estradiol + reduced [NADPH--hemoprotein reductase] + O2 = 2-hydroxy-17beta-estradiol + oxidized [NADPH--hemoprotein reductase] + H2O + H(+). The enzyme catalyses 17beta-estradiol + reduced [NADPH--hemoprotein reductase] + O2 = 4-hydroxy-17beta-estradiol + oxidized [NADPH--hemoprotein reductase] + H2O + H(+). The catalysed reaction is estrone + reduced [NADPH--hemoprotein reductase] + O2 = 2-hydroxyestrone + oxidized [NADPH--hemoprotein reductase] + H2O + H(+). It carries out the reaction estrone + reduced [NADPH--hemoprotein reductase] + O2 = 4-hydroxyestrone + oxidized [NADPH--hemoprotein reductase] + H2O + H(+). It catalyses the reaction testosterone + reduced [NADPH--hemoprotein reductase] + O2 = 6beta,17beta-dihydroxyandrost-4-en-3-one + oxidized [NADPH--hemoprotein reductase] + H2O + H(+). The enzyme catalyses progesterone + reduced [NADPH--hemoprotein reductase] + O2 = 6beta-hydroxyprogesterone + oxidized [NADPH--hemoprotein reductase] + H2O + H(+). The catalysed reaction is progesterone + reduced [NADPH--hemoprotein reductase] + O2 = 16alpha-hydroxyprogesterone + oxidized [NADPH--hemoprotein reductase] + H2O + H(+). It carries out the reaction all-trans-retinol + reduced [NADPH--hemoprotein reductase] + O2 = all-trans-retinal + oxidized [NADPH--hemoprotein reductase] + 2 H2O + H(+). It catalyses the reaction all-trans-retinal + reduced [NADPH--hemoprotein reductase] + O2 = all-trans-retinoate + oxidized [NADPH--hemoprotein reductase] + H2O + 2 H(+). The enzyme catalyses (5Z,8Z,11Z,14Z)-eicosatetraenoate + reduced [NADPH--hemoprotein reductase] + O2 = (8R,9S)-epoxy-(5Z,11Z,14Z)-eicosatrienoate + oxidized [NADPH--hemoprotein reductase] + H2O + H(+). The catalysed reaction is (5Z,8Z,11Z,14Z)-eicosatetraenoate + reduced [NADPH--hemoprotein reductase] + O2 = (11R,12S)-epoxy-(5Z,8Z,14Z)-eicosatrienoate + oxidized [NADPH--hemoprotein reductase] + H2O + H(+). It carries out the reaction (5Z,8Z,11Z,14Z)-eicosatetraenoate + reduced [NADPH--hemoprotein reductase] + O2 = (11S,12R)-epoxy-(5Z,8Z,14Z)-eicosatrienoate + oxidized [NADPH--hemoprotein reductase] + H2O + H(+). It catalyses the reaction (5Z,8Z,11Z,14Z)-eicosatetraenoate + reduced [NADPH--hemoprotein reductase] + O2 = (14R,15S)-epoxy-(5Z,8Z,11Z)-eicosatrienoate + oxidized [NADPH--hemoprotein reductase] + H2O + H(+). The enzyme catalyses (5S)-hydroperoxy-(6E,8Z,11Z,14Z)-eicosatetraenoate = 5-oxo-(6E,8Z,11Z,14Z)-eicosatetraenoate + H2O. The catalysed reaction is (12S)-hydroperoxy-(5Z,8Z,10E,14Z)-eicosatetraenoate = 12-oxo-(5Z,8Z,10E,14Z)-eicosatetraenoate + H2O. It carries out the reaction (13S)-hydroperoxy-(9Z,11E)-octadecadienoate = 13-oxo-(9Z,11E)-octadecadienoate + H2O. It catalyses the reaction (15S)-hydroperoxy-(5Z,8Z,11Z,13E)-eicosatetraenoate = 15-oxo-(5Z,8Z,11Z,13E)-eicosatetraenoate + H2O. It functions in the pathway steroid hormone biosynthesis. Its pathway is cofactor metabolism; retinol metabolism. It participates in lipid metabolism; arachidonate metabolism. Its activity is regulated as follows. Enzyme activity is increased by liposomes containing anionic phospholipids, phosphatidic acid and cardiolipin. Inhibited by naringenin with an IC(50) of 5 uM. Enzyme activity is increased by cytochrome b5. In terms of biological role, a cytochrome P450 monooxygenase involved in the metabolism of various endogenous substrates, including fatty acids, steroid hormones and vitamins. Mechanistically, uses molecular oxygen inserting one oxygen atom into a substrate, and reducing the second into a water molecule, with two electrons provided by NADPH via cytochrome P450 reductase (NADPH--hemoprotein reductase). Exhibits catalytic activity for the formation of hydroxyestrogens from estrone (E1) and 17beta-estradiol (E2), namely 2- and 4-hydroxy E1 and E2. Displays a predominant hydroxylase activity toward E2 at the C-4 position. Metabolizes testosterone and progesterone to B or D ring hydroxylated metabolites. May act as a major enzyme for all-trans retinoic acid biosynthesis in extrahepatic tissues. Catalyzes two successive oxidative transformation of all-trans retinol to all-trans retinal and then to the active form all-trans retinoic acid. Catalyzes the epoxidation of double bonds of certain PUFA. Converts arachidonic acid toward epoxyeicosatrienoic acid (EpETrE) regioisomers, 8,9-, 11,12-, and 14,15- EpETrE, that function as lipid mediators in the vascular system. Additionally, displays dehydratase activity toward oxygenated eicosanoids hydroperoxyeicosatetraenoates (HpETEs). This activity is independent of cytochrome P450 reductase, NADPH, and O2. Also involved in the oxidative metabolism of xenobiotics, particularly converting polycyclic aromatic hydrocarbons and heterocyclic aryl amines procarcinogens to DNA-damaging products. Plays an important role in retinal vascular development. Under hyperoxic O2 conditions, promotes retinal angiogenesis and capillary morphogenesis, likely by metabolizing the oxygenated products generated during the oxidative stress. Also, contributes to oxidative homeostasis and ultrastructural organization and function of trabecular meshwork tissue through modulation of POSTN expression. The polypeptide is Cytochrome P450 1B1 (Homo sapiens (Human)).